The sequence spans 392 residues: Nicotinate phosphoribosyltransferase (392 aa).

A Phosphohistidine; by autocatalysis modification is found at His214.

It belongs to the NAPRTase family. Transiently phosphorylated on a His residue during the reaction cycle. Phosphorylation strongly increases the affinity for substrates and increases the rate of nicotinate D-ribonucleotide production. Dephosphorylation regenerates the low-affinity form of the enzyme, leading to product release.

The catalysed reaction is nicotinate + 5-phospho-alpha-D-ribose 1-diphosphate + ATP + H2O = nicotinate beta-D-ribonucleotide + ADP + phosphate + diphosphate. It participates in cofactor biosynthesis; NAD(+) biosynthesis; nicotinate D-ribonucleotide from nicotinate: step 1/1. Catalyzes the synthesis of beta-nicotinate D-ribonucleotide from nicotinate and 5-phospho-D-ribose 1-phosphate at the expense of ATP. In Xanthomonas axonopodis pv. citri (strain 306), this protein is Nicotinate phosphoribosyltransferase.